A 142-amino-acid chain; its full sequence is ATP synthase epsilon chain (142 aa).

Belongs to the ATPase epsilon chain family. F-type ATPases have 2 components, CF(1) - the catalytic core - and CF(0) - the membrane proton channel. CF(1) has five subunits: alpha(3), beta(3), gamma(1), delta(1), epsilon(1). CF(0) has three main subunits: a, b and c.

The protein localises to the cell inner membrane. Its function is as follows. Produces ATP from ADP in the presence of a proton gradient across the membrane. The protein is ATP synthase epsilon chain of Shewanella halifaxensis (strain HAW-EB4).